The following is a 202-amino-acid chain: Endothelin-1 (202 aa).

An N-terminal signal peptide occupies residues 1–25 (MDYFPVIFSLLFVAFQGAPETAVLG). Residues 26 to 50 (AELSPRAEKEVQSPPPSTSWRPRRS) constitute a propeptide that is removed on maturation. A disordered region spans residues 28–47 (LSPRAEKEVQSPPPSTSWRP). Cystine bridges form between cysteine 53/cysteine 67 and cysteine 55/cysteine 63. A propeptide spanning residues 74 to 202 (VNTPERVVPY…DQKLIHNRAH (129 aa)) is cleaved from the precursor. Residues 110–124 (CQCAHQKDKKCWNFC) are endothelin-like.

The protein belongs to the endothelin/sarafotoxin family.

The protein localises to the secreted. Its function is as follows. Endothelins are endothelium-derived vasoconstrictor peptides. Probable ligand for G-protein coupled receptors EDNRA and EDNRB which activates PTK2B, BCAR1, BCAR3 and, GTPases RAP1 and RHOA cascade in glomerular mesangial cells. Also binds the DEAR/FBXW7-AS1 receptor. Promotes mesenteric arterial wall remodeling via activation of ROCK signaling and subsequent colocalization of NFATC3 with F-actin filaments. NFATC3 then translocates to the nucleus where it subsequently promotes the transcription of the smooth muscle hypertrophy and differentiation marker ACTA2. In Rattus norvegicus (Rat), this protein is Endothelin-1 (Edn1).